The primary structure comprises 301 residues: Hydroxymycolate synthase MmaA4 (301 aa).

Residues 42–43, 81–83, 103–108, 132–133, and Ile-145 contribute to the S-adenosyl-L-methionine site; these read YS, GCG, TLSKNQ, and WE. Cys-278 is an active-site residue.

The protein belongs to the CFA/CMAS family. Monomer.

It functions in the pathway lipid metabolism; mycolic acid biosynthesis. Its activity is regulated as follows. Inhibited by S-adenosyl-N-decyl-aminoethyl (SADAE). In terms of biological role, involved in the biosynthesis of hydroxymycolate, a common precursor of oxygenated mycolic acids (methoxy-mycolate and keto-mycolate). Probably transfers a methyl group from the S-adenosylmethionine (SAM) cofactor and, subsequently or simultaneously, a water molecule onto the double bound of ethylene substrates, leading to the formation of the hydroxylated product at the distal position. Involved in the activation of the antitubercular drug thiacetazone (TAC). The polypeptide is Hydroxymycolate synthase MmaA4 (mmaA4) (Mycobacterium tuberculosis (strain ATCC 25618 / H37Rv)).